Here is a 4582-residue protein sequence, read N- to C-terminus: Probable transcription-associated protein 1 (4582 aa).

The span at 1-11 (MSTNPPQPPPS) shows a compositional bias: pro residues. 10 disordered regions span residues 1–52 (MSTN…SSGN), 219–276 (TTTA…TTTT), 556–581 (KEKE…ANTT), 794–821 (VGGS…TNSN), 1152–1195 (ENEN…NNNI), 1483–1570 (QSTT…STIN), 2341–2410 (SIKT…NIDD), 2537–2567 (TTTT…QVTK), 2637–2662 (SDGG…GGAS), and 2741–2789 (SPST…TTTE). Residues 25–37 (PMSTTNPSQPTIT) are compositionally biased toward polar residues. Composition is skewed to low complexity over residues 38-50 (SSSA…SSSS), 219-250 (TTTA…NTIT), and 258-276 (PSTT…TTTT). Residues 556–573 (KEKEKELKDPQSLKDKLD) show a composition bias toward basic and acidic residues. Over residues 794 to 811 (VGGSGGSNSSGGGGGGGS) the composition is skewed to gly residues. Low complexity-rich tracts occupy residues 812 to 821 (NSSNNSTNSN), 1158 to 1194 (DNNN…NNNN), 1484 to 1504 (STTT…ETAT), 1515 to 1568 (TEPT…SSST), and 2341 to 2367 (SIKT…DSSS). Over residues 2378-2398 (SITTPSQGGVATPNVSDSTPT) the composition is skewed to polar residues. Low complexity-rich tracts occupy residues 2537–2556 (TTTT…DSSS) and 2650–2662 (SSSG…GGAS). The stretch at 2944–2991 (NDINQQQQQQQQQQQQQQQQQQQQQQQQQQQQQQQQQQQQQQHHQQEQ) forms a coiled coil. In terms of domain architecture, FAT spans 3185–3815 (VISFLGENYN…YYHFRKLVLE (631 aa)). Low complexity-rich tracts occupy residues 3491-3509 (TNTT…TTTT) and 3824-3916 (TTSP…ANTT). Disordered stretches follow at residues 3491-3517 (TNTT…PQQP) and 3821-3928 (SKFT…FSPL). Residues 4171-4541 (VCPRITLYGG…MLENRIDSLT (371 aa)) enclose the PI3K/PI4K catalytic domain. A G-loop region spans residues 4177–4183 (LYGGNGK). The disordered stretch occupies residues 4312–4337 (NITEDNNISSSSSSSSSSGSNSGENS). Low complexity predominate over residues 4320 to 4337 (SSSSSSSSSSGSNSGENS). The segment at 4400–4408 (DIGDIDPSK) is catalytic loop. The activation loop stretch occupies residues 4429-4451 (NRKLGFDLLQDNPYNQQQLLRLS). The 45-residue stretch at 4538-4582 (DSLTPSSQPDKTCFISPIVKKVNQLIQNSLSSNISQLDQLSCPWL) folds into the FATC domain.

Belongs to the PI3/PI4-kinase family. TRA1 subfamily.

The protein is Probable transcription-associated protein 1 (tra1) of Dictyostelium discoideum (Social amoeba).